Reading from the N-terminus, the 215-residue chain is Cytochrome c biogenesis ATP-binding export protein CcmA (215 aa).

Residues 8–215 (LQATALACER…RDLDLGQWSA (208 aa)) form the ABC transporter domain. 40–47 (GPNGCGKT) contacts ATP.

The protein belongs to the ABC transporter superfamily. CcmA exporter (TC 3.A.1.107) family. In terms of assembly, the complex is composed of two ATP-binding proteins (CcmA) and two transmembrane proteins (CcmB).

It localises to the cell inner membrane. It carries out the reaction heme b(in) + ATP + H2O = heme b(out) + ADP + phosphate + H(+). Its function is as follows. Part of the ABC transporter complex CcmAB involved in the biogenesis of c-type cytochromes; once thought to export heme, this seems not to be the case, but its exact role is uncertain. Responsible for energy coupling to the transport system. In Pseudomonas syringae pv. syringae (strain B728a), this protein is Cytochrome c biogenesis ATP-binding export protein CcmA.